A 270-amino-acid chain; its full sequence is MNNTIISMKEKELRFLKFFHQQKYNVVDFNLIEELDWQRLTHEDLQQMDERSFWQQNKSIYALRNDFTDQLFRYYSNYPTHFKKVAYAGDIIRDNRVIKQVGIENYEPQFDNITQNFLDFQYFIQNVLHDDIQFIILGHYQLIDALLEKNHQTREVMEMIEERNLSGLIQTLTFNHPIIQILKENTLNQLKILSHYLPERHPAMVAIQSWSQWFTDHGITEIHLDVTAQAPRSYYKGIFIKCHLKNTAHSVLTGGYYHGSLEGFGLGLTL.

The protein belongs to the class-II aminoacyl-tRNA synthetase family. HisZ subfamily. As to quaternary structure, heteromultimer composed of HisG and HisZ subunits.

Its subcellular location is the cytoplasm. It participates in amino-acid biosynthesis; L-histidine biosynthesis; L-histidine from 5-phospho-alpha-D-ribose 1-diphosphate: step 1/9. Functionally, required for the first step of histidine biosynthesis. May allow the feedback regulation of ATP phosphoribosyltransferase activity by histidine. This Staphylococcus epidermidis (strain ATCC 35984 / DSM 28319 / BCRC 17069 / CCUG 31568 / BM 3577 / RP62A) protein is ATP phosphoribosyltransferase regulatory subunit (hisZ).